The primary structure comprises 740 residues: Zn(2)-C6 fungal-type transcription factor mpsB (740 aa).

A DNA-binding region (zn(2)-C6 fungal-type) is located at residues 25 to 46; it reads RLKCDRNQPCSTCSHRGLSFSC. Positions 625-645 are disordered; it reads SISTPSHDQDDLDGEAATEAT.

The protein resides in the nucleus. Its function is as follows. Transcription factor; part of the gene cluster that mediates the biosynthesis of macrophasetins, 3-decalinoyltetramic acids (DTAs) which feature a tetramate (pyrrolidine-2,4-dione) unit connected to a decalin fragment and that have potent bioactivities. In Macrophomina phaseolina (strain MS6) (Charcoal rot fungus), this protein is Zn(2)-C6 fungal-type transcription factor mpsB.